A 138-amino-acid polypeptide reads, in one-letter code: NADPH-dependent 7-cyano-7-deazaguanine reductase (138 aa).

Cys-53 serves as the catalytic Thioimide intermediate. Residue Asp-60 is the Proton donor of the active site. Residues 75 to 77 and 94 to 95 contribute to the substrate site; these read VEL and HE.

Belongs to the GTP cyclohydrolase I family. QueF type 1 subfamily.

The protein resides in the cytoplasm. The enzyme catalyses 7-aminomethyl-7-carbaguanine + 2 NADP(+) = 7-cyano-7-deazaguanine + 2 NADPH + 3 H(+). It functions in the pathway tRNA modification; tRNA-queuosine biosynthesis. Its function is as follows. Catalyzes the NADPH-dependent reduction of 7-cyano-7-deazaguanine (preQ0) to 7-aminomethyl-7-deazaguanine (preQ1). The protein is NADPH-dependent 7-cyano-7-deazaguanine reductase of Gloeothece citriformis (strain PCC 7424) (Cyanothece sp. (strain PCC 7424)).